The chain runs to 433 residues: Ribonuclease T2-like (433 aa).

Cystine bridges form between cysteine 28–cysteine 47, cysteine 36–cysteine 95, cysteine 46–cysteine 171, and cysteine 103–cysteine 163. Asparagine 38 and asparagine 71 each carry an N-linked (GlcNAc...) asparagine glycan. Residues histidine 88, glutamate 156, and histidine 160 contribute to the active site. 2 N-linked (GlcNAc...) asparagine glycosylation sites follow: asparagine 221 and asparagine 263. The cysteines at positions 247 and 283 are disulfide-linked.

This sequence belongs to the RNase T2 family.

The protein localises to the vacuole lumen. It is found in the cytoplasm. The catalysed reaction is a ribonucleotidyl-ribonucleotide-RNA + H2O = a 3'-end 3'-phospho-ribonucleotide-RNA + a 5'-end dephospho-ribonucleoside-RNA + H(+). In terms of biological role, rnase which modulates cell survival under stress conditions. Released from the vacuole to the cytoplasm during stress to promote tRNA and rRNA cleavage and to activate separately a downstream pathway that promotes cell death. Involved in cell size, vacuolar morphology and growth at high temperatures and high salt concentration. The protein is Ribonuclease T2-like (RNY1) of Candida glabrata (strain ATCC 2001 / BCRC 20586 / JCM 3761 / NBRC 0622 / NRRL Y-65 / CBS 138) (Yeast).